Reading from the N-terminus, the 307-residue chain is Fructose-bisphosphate aldolase (307 aa).

Ser49 is a D-glyceraldehyde 3-phosphate binding site. Asp82 (proton donor) is an active-site residue. Zn(2+) contacts are provided by His83, Asp104, Glu134, and His180. Gly181 contacts dihydroxyacetone phosphate. Residue His210 participates in Zn(2+) binding. Residues 211-213 and 253-256 each bind dihydroxyacetone phosphate; these read GAS and NTDT.

It belongs to the class II fructose-bisphosphate aldolase family. In terms of assembly, homodimer. Requires Zn(2+) as cofactor.

The enzyme catalyses beta-D-fructose 1,6-bisphosphate = D-glyceraldehyde 3-phosphate + dihydroxyacetone phosphate. Its pathway is carbohydrate degradation; glycolysis; D-glyceraldehyde 3-phosphate and glycerone phosphate from D-glucose: step 4/4. In terms of biological role, catalyzes the aldol condensation of dihydroxyacetone phosphate (DHAP or glycerone-phosphate) with glyceraldehyde 3-phosphate (G3P) to form fructose 1,6-bisphosphate (FBP) in gluconeogenesis and the reverse reaction in glycolysis. This is Fructose-bisphosphate aldolase (fba) from Helicobacter pylori (strain ATCC 700392 / 26695) (Campylobacter pylori).